Here is a 523-residue protein sequence, read N- to C-terminus: Melanoma-associated antigen E2 (523 aa).

2 MAGE domains span residues 88-288 (LEDR…YNKA) and 311-502 (MNDK…YREA).

This is Melanoma-associated antigen E2 (MAGEE2) from Homo sapiens (Human).